We begin with the raw amino-acid sequence, 117 residues long: Cell division protein FtsB (117 aa).

Residues 1–6 (MRDWRW) are Cytoplasmic-facing. Residues 7–24 (MLLVLALLLGWLQYRFWF) form a helical membrane-spanning segment. The Periplasmic portion of the chain corresponds to 25-117 (GPGNSGEVMM…QVGDHPADVP (93 aa)). Residues 29 to 69 (SGEVMMLEAQVANQERDNEGLQQRNDALAAEVKDLKEGQSA) adopt a coiled-coil conformation.

This sequence belongs to the FtsB family. In terms of assembly, part of a complex composed of FtsB, FtsL and FtsQ.

The protein resides in the cell inner membrane. Functionally, essential cell division protein. May link together the upstream cell division proteins, which are predominantly cytoplasmic, with the downstream cell division proteins, which are predominantly periplasmic. This Stenotrophomonas maltophilia (strain K279a) protein is Cell division protein FtsB.